The sequence spans 232 residues: Phosphatidylserine decarboxylase proenzyme (232 aa).

Ser190 serves as the catalytic Schiff-base intermediate with substrate; via pyruvic acid. Ser190 carries the pyruvic acid (Ser); by autocatalysis modification.

It belongs to the phosphatidylserine decarboxylase family. PSD-A subfamily. Heterodimer of a large membrane-associated beta subunit and a small pyruvoyl-containing alpha subunit. It depends on pyruvate as a cofactor. Is synthesized initially as an inactive proenzyme. Formation of the active enzyme involves a self-maturation process in which the active site pyruvoyl group is generated from an internal serine residue via an autocatalytic post-translational modification. Two non-identical subunits are generated from the proenzyme in this reaction, and the pyruvate is formed at the N-terminus of the alpha chain, which is derived from the carboxyl end of the proenzyme. The post-translation cleavage follows an unusual pathway, termed non-hydrolytic serinolysis, in which the side chain hydroxyl group of the serine supplies its oxygen atom to form the C-terminus of the beta chain, while the remainder of the serine residue undergoes an oxidative deamination to produce ammonia and the pyruvoyl prosthetic group on the alpha chain.

Its subcellular location is the cell membrane. The catalysed reaction is a 1,2-diacyl-sn-glycero-3-phospho-L-serine + H(+) = a 1,2-diacyl-sn-glycero-3-phosphoethanolamine + CO2. Its pathway is phospholipid metabolism; phosphatidylethanolamine biosynthesis; phosphatidylethanolamine from CDP-diacylglycerol: step 2/2. Functionally, catalyzes the formation of phosphatidylethanolamine (PtdEtn) from phosphatidylserine (PtdSer). The protein is Phosphatidylserine decarboxylase proenzyme of Rhodopseudomonas palustris (strain HaA2).